The primary structure comprises 327 residues: F-box/LRR-repeat protein At3g58900 (327 aa).

In terms of domain architecture, F-box spans 1 to 47 (MDLFSSLPNELLYHILSFLSTKEAALTSVLSKRWRNLFAFVPYLEFD). LRR repeat units follow at residues 116 to 144 (DLFIDFRDLYSLPHEVGVSRTLVVLRVGS), 161 to 192 (KTLVLDSCWLCIGQFQILLLACPALEELDMTN), 199 to 230 (NVTVSSSILKELTIDLHGCCSVVNLKSLSFDA), 235 to 261 (YFYYCDSLAEDYPQVNLKNLVEAQINL), and 277 to 308 (EMLVADDVFPGLGNAWKLITGLRNVQQLYLSP).

In Arabidopsis thaliana (Mouse-ear cress), this protein is F-box/LRR-repeat protein At3g58900.